Here is a 140-residue protein sequence, read N- to C-terminus: Nucleoside diphosphate kinase (140 aa).

ATP is bound by residues Lys-11, Phe-59, Arg-87, Thr-93, Arg-104, and Asn-114. His-117 functions as the Pros-phosphohistidine intermediate in the catalytic mechanism.

It belongs to the NDK family. Homotetramer. Mg(2+) serves as cofactor.

It localises to the cytoplasm. The catalysed reaction is a 2'-deoxyribonucleoside 5'-diphosphate + ATP = a 2'-deoxyribonucleoside 5'-triphosphate + ADP. It catalyses the reaction a ribonucleoside 5'-diphosphate + ATP = a ribonucleoside 5'-triphosphate + ADP. Its function is as follows. Major role in the synthesis of nucleoside triphosphates other than ATP. The ATP gamma phosphate is transferred to the NDP beta phosphate via a ping-pong mechanism, using a phosphorylated active-site intermediate. This Francisella philomiragia subsp. philomiragia (strain ATCC 25017 / CCUG 19701 / FSC 153 / O#319-036) protein is Nucleoside diphosphate kinase.